The chain runs to 130 residues: Small ribosomal subunit protein uS8 (130 aa).

The protein belongs to the universal ribosomal protein uS8 family. Part of the 30S ribosomal subunit. Contacts proteins S5 and S12.

Functionally, one of the primary rRNA binding proteins, it binds directly to 16S rRNA central domain where it helps coordinate assembly of the platform of the 30S subunit. In Coxiella burnetii (strain RSA 331 / Henzerling II), this protein is Small ribosomal subunit protein uS8.